A 545-amino-acid chain; its full sequence is Sulfite oxidase, mitochondrial (545 aa).

The N-terminal 79 residues, 1–79 (MLLLHRAVVL…YQDHRCRAAQ (79 aa)), are a transit peptide targeting the mitochondrion. In terms of domain architecture, Cytochrome b5 heme-binding spans 82–161 (THIYTKEEVS…LAQYKIGELN (80 aa)). His-118 is a binding site for heme b. Ser-123 bears the Phosphoserine mark. Residues His-143, Gln-145, and His-147 each contribute to the heme b site. Residues 165–174 (KVAPTVETSD) are hinge. A moco domain region spans residues 175–401 (PYADDPVRHP…YSHWQRRDYK (227 aa)). Residues 215–219 (FTRNH), Cys-264, Asp-322, His-361, Arg-366, and 377–379 (HVK) each bind Mo-molybdopterin. The interval 402–538 (GFSPSVDWET…RGVLSNAWHR (137 aa)) is homodimerization.

Homodimer. It depends on heme b as a cofactor. Mo-molybdopterin serves as cofactor.

The protein resides in the mitochondrion intermembrane space. It catalyses the reaction sulfite + O2 + H2O = sulfate + H2O2. It functions in the pathway energy metabolism; sulfur metabolism. In terms of biological role, catalyzes the oxidation of sulfite to sulfate, the terminal reaction in the oxidative degradation of sulfur-containing amino acids. This Homo sapiens (Human) protein is Sulfite oxidase, mitochondrial (SUOX).